Reading from the N-terminus, the 93-residue chain is MTLQDLLDRILGRQPASATTARERLQLVLAHDRSDLSPELLDQMRREIFEVVAKYVDIDLEEGDVTLETEDRVTALVANLPIRRSMASSKPGS.

The protein belongs to the MinE family.

Functionally, prevents the cell division inhibition by proteins MinC and MinD at internal division sites while permitting inhibition at polar sites. This ensures cell division at the proper site by restricting the formation of a division septum at the midpoint of the long axis of the cell. The protein is Cell division topological specificity factor of Synechococcus sp. (strain WH7803).